A 163-amino-acid polypeptide reads, in one-letter code: Nucleotide-binding protein Bcer98_0876 (163 aa).

It belongs to the YajQ family.

Nucleotide-binding protein. This chain is Nucleotide-binding protein Bcer98_0876, found in Bacillus cytotoxicus (strain DSM 22905 / CIP 110041 / 391-98 / NVH 391-98).